Reading from the N-terminus, the 508-residue chain is Maturase K (508 aa).

The protein belongs to the intron maturase 2 family. MatK subfamily.

The protein localises to the plastid. The protein resides in the chloroplast. Its function is as follows. Usually encoded in the trnK tRNA gene intron. Probably assists in splicing its own and other chloroplast group II introns. This Lupinus cosentinii (West Australian blue lupine) protein is Maturase K.